The following is a 330-amino-acid chain: Thioredoxin domain-containing protein 6 (330 aa).

Positions 11–115 constitute a Thioredoxin domain; it reads QVNISTQELW…QKTILDQLEA (105 aa). The segment at 157–303 is NDK; the sequence is ERTCTLAIIK…LFPSLKFSDK (147 aa). The disordered stretch occupies residues 300 to 330; that stretch reads FSDKDTEAPQGGEAEATAGPTEALCFPEDVD. Low complexity predominate over residues 307–322; the sequence is APQGGEAEATAGPTEA.

Belongs to the NDK family. Monomer and homodimer. As to expression, detected at very low levels in testis, lung and brain.

The protein resides in the cytoplasm. It is found in the cytoskeleton. The protein localises to the cilium axoneme. Its subcellular location is the dynein axonemal particle. Functionally, may be a regulator of microtubule physiology. The chain is Thioredoxin domain-containing protein 6 from Homo sapiens (Human).